Here is a 427-residue protein sequence, read N- to C-terminus: 3-phosphoshikimate 1-carboxyvinyltransferase (427 aa).

Lysine 22, serine 23, and arginine 27 together coordinate 3-phosphoshikimate. Lysine 22 is a phosphoenolpyruvate binding site. Glycine 96 and arginine 124 together coordinate phosphoenolpyruvate. Residues serine 170, serine 171, glutamine 172, serine 198, aspartate 313, asparagine 336, and lysine 340 each coordinate 3-phosphoshikimate. A phosphoenolpyruvate-binding site is contributed by glutamine 172. Aspartate 313 (proton acceptor) is an active-site residue. 3 residues coordinate phosphoenolpyruvate: arginine 344, arginine 386, and lysine 411.

The protein belongs to the EPSP synthase family. Monomer.

The protein resides in the cytoplasm. It catalyses the reaction 3-phosphoshikimate + phosphoenolpyruvate = 5-O-(1-carboxyvinyl)-3-phosphoshikimate + phosphate. It participates in metabolic intermediate biosynthesis; chorismate biosynthesis; chorismate from D-erythrose 4-phosphate and phosphoenolpyruvate: step 6/7. Functionally, catalyzes the transfer of the enolpyruvyl moiety of phosphoenolpyruvate (PEP) to the 5-hydroxyl of shikimate-3-phosphate (S3P) to produce enolpyruvyl shikimate-3-phosphate and inorganic phosphate. The protein is 3-phosphoshikimate 1-carboxyvinyltransferase of Aeromonas salmonicida (strain A449).